The sequence spans 129 residues: Putative pre-16S rRNA nuclease (129 aa).

It belongs to the YqgF nuclease family.

It localises to the cytoplasm. In terms of biological role, could be a nuclease involved in processing of the 5'-end of pre-16S rRNA. The sequence is that of Putative pre-16S rRNA nuclease from Campylobacter jejuni subsp. doylei (strain ATCC BAA-1458 / RM4099 / 269.97).